The sequence spans 259 residues: Ubiquinone/menaquinone biosynthesis C-methyltransferase UbiE (259 aa).

S-adenosyl-L-methionine-binding positions include T82, D103, and 131 to 132 (NA).

It belongs to the class I-like SAM-binding methyltransferase superfamily. MenG/UbiE family.

The enzyme catalyses a 2-demethylmenaquinol + S-adenosyl-L-methionine = a menaquinol + S-adenosyl-L-homocysteine + H(+). The catalysed reaction is a 2-methoxy-6-(all-trans-polyprenyl)benzene-1,4-diol + S-adenosyl-L-methionine = a 5-methoxy-2-methyl-3-(all-trans-polyprenyl)benzene-1,4-diol + S-adenosyl-L-homocysteine + H(+). It participates in quinol/quinone metabolism; menaquinone biosynthesis; menaquinol from 1,4-dihydroxy-2-naphthoate: step 2/2. Its pathway is cofactor biosynthesis; ubiquinone biosynthesis. Functionally, methyltransferase required for the conversion of demethylmenaquinol (DMKH2) to menaquinol (MKH2) and the conversion of 2-polyprenyl-6-methoxy-1,4-benzoquinol (DDMQH2) to 2-polyprenyl-3-methyl-6-methoxy-1,4-benzoquinol (DMQH2). In Agrobacterium fabrum (strain C58 / ATCC 33970) (Agrobacterium tumefaciens (strain C58)), this protein is Ubiquinone/menaquinone biosynthesis C-methyltransferase UbiE.